We begin with the raw amino-acid sequence, 150 residues long: MFCPFCHHPQSRVIDSRTVENGFVTRRRRQCTKCHGRFTTVEKSVLLVEKRNGVTEDFSKDKLIRGVRRACQGRNVSDDALKLLAQEVEIDLRAQGGSRVNSNDVGLAVLEPLRKLDEVAYMRFASVYKSFSSMEDFEREITEFKARRSQ.

A zinc finger lies at 3-34 (CPFCHHPQSRVIDSRTVENGFVTRRRRQCTKC). Residues 46-136 (LLVEKRNGVT…VYKSFSSMED (91 aa)) enclose the ATP-cone domain.

It belongs to the NrdR family. Zn(2+) is required as a cofactor.

Its function is as follows. Negatively regulates transcription of bacterial ribonucleotide reductase nrd genes and operons by binding to NrdR-boxes. This chain is Transcriptional repressor NrdR, found in Corynebacterium kroppenstedtii (strain DSM 44385 / JCM 11950 / CIP 105744 / CCUG 35717).